Reading from the N-terminus, the 1191-residue chain is MDPNNAAASSAHDLSSLDLSCLNEAERIVINSFMRGPHAHFEHLGVGPNVKWDENLSKRAFYHLVAINHATLKLLVAQARLCSMQQMNAPNLTNGASATALGSLHPFSLGNPATSVTMASNPLANGPGLRTQLMAPDFALALLGNGTTPHASAGLGALNPGLYNPSASILGGPSSSGASSVLPSPSAHTPDAATDANHLPNPDPASGRQELTRAGRPARKKMKATALDAALRTEMPNWPSVQDDFVRWTRLAWFEAGFASTISDGAIGVQTRRPFSPFLTTTFAQVGVHLPSMSPNLLRAFNSWVDMHLRSLRDHFKGRIDKPHAGKASLAARSLEDTTFVSLTEFINNMCNSYNLINSELSVAAVRALCKLYLNVRNMATAKDSEGVLRVHIRDASNRQPPNILRGTLPQDREDDDLLTLITECGAIDFDLPTDTSDTMALAVLMVMSTSATTLTLDQAGCFSSLSGAASAQVNLLTNVTCEWFSVTMVTESGTSTISLPSSTRPSAHISAHGKDFALSWPKITEGLEIDIGLTLELQHNVTLDAYELRAKVVNHRPKAKASLWQLELNLRNVRQPEDGSAFFPAGYGVRYQGAFAASGSYPSSGATMQWMAAGGGAANEGQGLYLAAHDGYGYIKFLNAAAVEDVASLSIVYLVEDAGLPFAESTMPFPLTLAVVGGGDDLWYQAAQMYRTFALGEAQWMQAGRLHQRQDIPGWYVNNSIWINSGWQCHDIFNETQGDPHTVLNVTRRIRERFNTNMALHWYEWQQGPDANASARYRFDTHYPDYLPPRGGDYFGTVVRELEKEGVHIFPYINGRIFDVASTSYAQHNGSDHCCRKANPSFGAADQSFYVESYGSGSTFHTADPTDIYWQTTLADTVDALVNTYGVEGVYIDQLAAAAPTPDWTSWHNHTKGGGFYWRTGIVDIIKAMRQRVGPTVPLVTESNSEPYMDAISGFLTLVAFEPAFVGTKALVPAFPAIYGGYFVGFGDIFNAEDLADQDPLMARVVAQFVYGAQLGWFSLGGVTSGPDVDTSCGKMGEYDLWMSESSDAIVAAVEYYGNLRVCLLEYLAHGRILAPPSLSPAPAEFMAVETAVQNAGPFPSAMSAVWLHEDEASAVIIVAGVLDAGQTYNVSVDLTFSLPSLHDRQVTVQEMSCDGLSQQLDVMPANDIQIYDVTLSDRNARVYRVHFGA.

The segment covering 173 to 187 (PSSSGASSVLPSPSA) has biased composition (low complexity). Residues 173 to 221 (PSSSGASSVLPSPSAHTPDAATDANHLPNPDPASGRQELTRAGRPARKK) are disordered.

This sequence belongs to the glycoside hydrolase-like 3 (GHL3) family.

The chain is Putative glycoside hydrolase 22789 from Monosiga brevicollis (Choanoflagellate).